The sequence spans 390 residues: Formate-dependent phosphoribosylglycinamide formyltransferase (390 aa).

Residues 18–19 (EL) and E78 each bind N(1)-(5-phospho-beta-D-ribosyl)glycinamide. ATP-binding positions include R110, K151, 156 to 161 (SSGKGQ), 191 to 194 (EEFL), and E199. The ATP-grasp domain occupies 115-305 (DLASKELNIK…EFELHLRAFL (191 aa)). 2 residues coordinate Mg(2+): E264 and E276. N(1)-(5-phospho-beta-D-ribosyl)glycinamide is bound by residues D283, K353, and 360 to 361 (RR).

It belongs to the PurK/PurT family. In terms of assembly, homodimer.

It catalyses the reaction N(1)-(5-phospho-beta-D-ribosyl)glycinamide + formate + ATP = N(2)-formyl-N(1)-(5-phospho-beta-D-ribosyl)glycinamide + ADP + phosphate + H(+). It functions in the pathway purine metabolism; IMP biosynthesis via de novo pathway; N(2)-formyl-N(1)-(5-phospho-D-ribosyl)glycinamide from N(1)-(5-phospho-D-ribosyl)glycinamide (formate route): step 1/1. Functionally, involved in the de novo purine biosynthesis. Catalyzes the transfer of formate to 5-phospho-ribosyl-glycinamide (GAR), producing 5-phospho-ribosyl-N-formylglycinamide (FGAR). Formate is provided by PurU via hydrolysis of 10-formyl-tetrahydrofolate. The protein is Formate-dependent phosphoribosylglycinamide formyltransferase of Prochlorococcus marinus (strain MIT 9515).